A 419-amino-acid chain; its full sequence is G protein-activated inward rectifier potassium channel 4 (419 aa).

Topologically, residues 1–86 (MAGDSRNAMN…LFTTLVDLKW (86 aa)) are cytoplasmic. S5 is modified (phosphoserine). A helical transmembrane segment spans residues 87 to 111 (RFNLLVFTMVYTITWLFFGFIWWLI). The Extracellular segment spans residues 112 to 135 (AYVRGDLDHVGDQEWIPCVENLSG). The segment at residues 136–147 (FVSAFLFSIETE) is an intramembrane region (helical; Pore-forming). The segment at residues 148 to 154 (TTIGYGF) is an intramembrane region (pore-forming). Positions 149-154 (TIGYGF) match the Selectivity filter motif. The Extracellular portion of the chain corresponds to 155 to 163 (RVITEKCPE). The chain crosses the membrane as a helical span at residues 164–185 (GIILLLVQAILGSIVNAFMVGC). Over 186–419 (MFVKISQPKK…SVSQATRGSM (234 aa)) the chain is Cytoplasmic. Positions 388 to 419 (GCAEAGNEAEAEKDEEGEPNGLSVSQATRGSM) are disordered. Positions 394-405 (NEAEAEKDEEGE) are enriched in acidic residues. Residues 409-419 (LSVSQATRGSM) are compositionally biased toward polar residues.

It belongs to the inward rectifier-type potassium channel (TC 1.A.2.1) family. KCNJ5 subfamily. As to quaternary structure, associates with KCNJ3/GIRK1 to form a G-protein-activated heteromultimer pore-forming unit. Associates with KCNJ6/GRIK2 to form a G-protein-activated heteromultimer pore-forming unit. Expressed in the heart.

The protein localises to the membrane. It catalyses the reaction K(+)(in) = K(+)(out). Heteromultimer composed of KCNJ3/GIRK1 and KCNJ5/GIRK4 is activated by phosphatidylinositol 4,5 biphosphate (PtdIns(4,5)P2). Functionally, inward rectifier potassium channels are characterized by a greater tendency to allow potassium to flow into the cell rather than out of it. Their voltage dependence is regulated by the concentration of extracellular potassium; as external potassium is raised, the voltage range of the channel opening shifts to more positive voltages. The inward rectification is mainly due to the blockage of outward current by internal magnesium. Can be blocked by external barium. This potassium channel is controlled by G proteins. Forms a functional channel in association with KCNJ3/GIRK1. This Mus musculus (Mouse) protein is G protein-activated inward rectifier potassium channel 4 (Kcnj5).